Reading from the N-terminus, the 298-residue chain is Glyoxalase domain-containing protein 4 (298 aa).

Residues 5–130 (RALHFVFKVK…GGYKFYLQDR (126 aa)) enclose the VOC 1 domain. K109 bears the N6-succinyllysine mark. Phosphoserine is present on S131. The VOC 2 domain occupies 137 to 258 (PVLKVTLAVS…DGHEICFVGD (122 aa)). K273 is modified (N6-succinyllysine).

It belongs to the glyoxalase I family. In terms of assembly, interacts with NUDT9.

Its subcellular location is the mitochondrion. This chain is Glyoxalase domain-containing protein 4 (Glod4), found in Mus musculus (Mouse).